Here is a 130-residue protein sequence, read N- to C-terminus: Small ribosomal subunit protein uS9 (130 aa).

Belongs to the universal ribosomal protein uS9 family.

This Herminiimonas arsenicoxydans protein is Small ribosomal subunit protein uS9.